A 405-amino-acid polypeptide reads, in one-letter code: Na(+)-translocating NADH-quinone reductase subunit F (405 aa).

Residues 3–23 (IILGIVMFTVIVLVLALMILF) form a helical membrane-spanning segment. In terms of domain architecture, 2Fe-2S ferredoxin-type spans 32–124 (GDITIKVNGE…DMDIEVPEEV (93 aa)). Cys-67, Cys-73, Cys-76, and Cys-108 together coordinate [2Fe-2S] cluster. In terms of domain architecture, FAD-binding FR-type spans 127 to 267 (VKKWECTVIS…SGPFGEFFAK (141 aa)).

This sequence belongs to the NqrF family. Composed of six subunits; NqrA, NqrB, NqrC, NqrD, NqrE and NqrF. Requires [2Fe-2S] cluster as cofactor. The cofactor is FAD.

It localises to the cell inner membrane. It carries out the reaction a ubiquinone + n Na(+)(in) + NADH + H(+) = a ubiquinol + n Na(+)(out) + NAD(+). In terms of biological role, NQR complex catalyzes the reduction of ubiquinone-1 to ubiquinol by two successive reactions, coupled with the transport of Na(+) ions from the cytoplasm to the periplasm. The first step is catalyzed by NqrF, which accepts electrons from NADH and reduces ubiquinone-1 to ubisemiquinone by a one-electron transfer pathway. This is Na(+)-translocating NADH-quinone reductase subunit F from Neisseria meningitidis serogroup C / serotype 2a (strain ATCC 700532 / DSM 15464 / FAM18).